The sequence spans 279 residues: Energy-coupling factor transporter ATP-binding protein EcfA2 (279 aa).

The ABC transporter domain maps to 3 to 245 (IALENVNFIY…VVFMEEVQLG (243 aa)). Residue 40-47 (GHTGSGKS) participates in ATP binding.

This sequence belongs to the ABC transporter superfamily. Energy-coupling factor EcfA family. Forms a stable energy-coupling factor (ECF) transporter complex composed of 2 membrane-embedded substrate-binding proteins (S component), 2 ATP-binding proteins (A component) and 2 transmembrane proteins (T component).

It localises to the cell membrane. Its function is as follows. ATP-binding (A) component of a common energy-coupling factor (ECF) ABC-transporter complex. Unlike classic ABC transporters this ECF transporter provides the energy necessary to transport a number of different substrates. The protein is Energy-coupling factor transporter ATP-binding protein EcfA2 of Streptococcus pneumoniae serotype 2 (strain D39 / NCTC 7466).